The sequence spans 318 residues: uncharacterized protein (318 aa).

The next 2 membrane-spanning stretches (helical) occupy residues 230-250 and 264-284; these read VWTY…SFLI and ASLM…LGVI.

The protein belongs to the glycosyltransferase 2 family. GtrB subfamily.

The protein resides in the cell membrane. This is an uncharacterized protein from Synechocystis sp. (strain ATCC 27184 / PCC 6803 / Kazusa).